The sequence spans 260 residues: Hydroxyacylglutathione hydrolase (260 aa).

Zn(2+) is bound by residues H66, H68, D70, H71, H125, D150, and H188.

The protein belongs to the metallo-beta-lactamase superfamily. Glyoxalase II family. As to quaternary structure, monomer. Zn(2+) is required as a cofactor.

It catalyses the reaction an S-(2-hydroxyacyl)glutathione + H2O = a 2-hydroxy carboxylate + glutathione + H(+). The protein operates within secondary metabolite metabolism; methylglyoxal degradation; (R)-lactate from methylglyoxal: step 2/2. Thiolesterase that catalyzes the hydrolysis of S-D-lactoyl-glutathione to form glutathione and D-lactic acid. The chain is Hydroxyacylglutathione hydrolase from Prochlorococcus marinus (strain MIT 9303).